Reading from the N-terminus, the 179-residue chain is MATIRIHDEQNTSIENQEEVEQFLKRQEVIYEKWDITKLPAGLKEKYDLTDEEKQEILDVFAAEIKDISERRGYKASDVISLSDQNPKLDELLKNFKQEHHHTDDEVRFIVSGHGIFAIEGKDGTFFDVLLNPGDLISVPENTRHYFTLQEDRKVVAVRIFVTTEGWVPIYEKENVNQS.

Residues His100, His102, Glu106, and His145 each coordinate Fe(2+). Ni(2+) is bound by residues His100, His102, Glu106, and His145.

The protein belongs to the acireductone dioxygenase (ARD) family. As to quaternary structure, monomer. The cofactor is Fe(2+). Ni(2+) is required as a cofactor.

The catalysed reaction is 1,2-dihydroxy-5-(methylsulfanyl)pent-1-en-3-one + O2 = 3-(methylsulfanyl)propanoate + CO + formate + 2 H(+). It carries out the reaction 1,2-dihydroxy-5-(methylsulfanyl)pent-1-en-3-one + O2 = 4-methylsulfanyl-2-oxobutanoate + formate + 2 H(+). It functions in the pathway amino-acid biosynthesis; L-methionine biosynthesis via salvage pathway; L-methionine from S-methyl-5-thio-alpha-D-ribose 1-phosphate: step 5/6. Functionally, catalyzes 2 different reactions between oxygen and the acireductone 1,2-dihydroxy-3-keto-5-methylthiopentene (DHK-MTPene) depending upon the metal bound in the active site. Fe-containing acireductone dioxygenase (Fe-ARD) produces formate and 2-keto-4-methylthiobutyrate (KMTB), the alpha-ketoacid precursor of methionine in the methionine recycle pathway. Ni-containing acireductone dioxygenase (Ni-ARD) produces methylthiopropionate, carbon monoxide and formate, and does not lie on the methionine recycle pathway. The polypeptide is Acireductone dioxygenase (Bacillus licheniformis (strain ATCC 14580 / DSM 13 / JCM 2505 / CCUG 7422 / NBRC 12200 / NCIMB 9375 / NCTC 10341 / NRRL NRS-1264 / Gibson 46)).